Consider the following 76-residue polypeptide: Esculentin-2-ALb (76 aa).

Residues 1–22 form the signal peptide; the sequence is MFTMKKSLLLLFFLGTISLSLC. Positions 23 to 39 are excised as a propeptide; the sequence is EEERSADEDDGEKGVKR. A disulfide bridge connects residues Cys-70 and Cys-76.

As to expression, expressed by the skin glands.

The protein resides in the secreted. Functionally, antimicrobial peptide with activity against Gram-positive and Gram-negative bacteria and against fungi. Has been tested against S.aureus (MIC=1.25 ug/mL), B.pumilus (MIC=2.5 ug/mL), B.cereus (MIC=7.5 ug/mL), E.coli (MIC=12.5 ug/mL), B.dysenteriae (MIC=7.5 ug/mL), A.cacoaceticus (MIC=12.5 ug/mL), P.aeruginosa (MIC=50.0 ug/mL) and C.albicans (MIC=2.5 ug/mL). Also shows a weak hemolytic activity. This chain is Esculentin-2-ALb, found in Amolops loloensis (Lolokou Sucker Frog).